The chain runs to 653 residues: Chaperone protein DnaK (653 aa).

Thr-200 carries the post-translational modification Phosphothreonine; by autocatalysis. The interval 612-653 (QGAAGAAGAAGGAGAAAGAEAAGASQQADDVVDAEFKEVKKD) is disordered. Low complexity predominate over residues 627–639 (AAGAEAAGASQQA).

Belongs to the heat shock protein 70 family.

In terms of biological role, acts as a chaperone. The sequence is that of Chaperone protein DnaK from Paraburkholderia phymatum (strain DSM 17167 / CIP 108236 / LMG 21445 / STM815) (Burkholderia phymatum).